Reading from the N-terminus, the 529-residue chain is Peptide chain release factor 3 (529 aa).

The tr-type G domain occupies 11–280; that stretch reads AKRRTFAIIS…GLVEWAPAPM (270 aa). Residues 20–27, 88–92, and 142–145 each bind GTP; these read SHPDAGKT, DTPGH, and NKLD.

The protein belongs to the TRAFAC class translation factor GTPase superfamily. Classic translation factor GTPase family. PrfC subfamily.

It localises to the cytoplasm. In terms of biological role, increases the formation of ribosomal termination complexes and stimulates activities of RF-1 and RF-2. It binds guanine nucleotides and has strong preference for UGA stop codons. It may interact directly with the ribosome. The stimulation of RF-1 and RF-2 is significantly reduced by GTP and GDP, but not by GMP. The sequence is that of Peptide chain release factor 3 from Klebsiella pneumoniae (strain 342).